The sequence spans 188 residues: dCTP deaminase (188 aa).

DCTP-binding positions include 111-116 (KSTYAR), 135-137 (TLE), glutamine 156, tyrosine 170, lysine 179, and glutamine 180. The active-site Proton donor/acceptor is glutamate 137.

The protein belongs to the dCTP deaminase family. In terms of assembly, homotrimer.

The catalysed reaction is dCTP + H2O + H(+) = dUTP + NH4(+). Its pathway is pyrimidine metabolism; dUMP biosynthesis; dUMP from dCTP (dUTP route): step 1/2. In terms of biological role, catalyzes the deamination of dCTP to dUTP. The polypeptide is dCTP deaminase (Rickettsia felis (strain ATCC VR-1525 / URRWXCal2) (Rickettsia azadi)).